The sequence spans 212 residues: Probable nicotinate-nucleotide adenylyltransferase (212 aa).

Belongs to the NadD family.

It catalyses the reaction nicotinate beta-D-ribonucleotide + ATP + H(+) = deamido-NAD(+) + diphosphate. The protein operates within cofactor biosynthesis; NAD(+) biosynthesis; deamido-NAD(+) from nicotinate D-ribonucleotide: step 1/1. Catalyzes the reversible adenylation of nicotinate mononucleotide (NaMN) to nicotinic acid adenine dinucleotide (NaAD). The polypeptide is Probable nicotinate-nucleotide adenylyltransferase (Shewanella sp. (strain MR-7)).